The following is a 281-amino-acid chain: Diaminopimelate epimerase (281 aa).

Asn13 and Asn66 together coordinate substrate. The active-site Proton donor is Cys75. Substrate contacts are provided by residues 76–77 (GN), Asn164, Asn197, and 215–216 (ER). The Proton acceptor role is filled by Cys224. Position 225 to 226 (225 to 226 (GT)) interacts with substrate.

The protein belongs to the diaminopimelate epimerase family. In terms of assembly, homodimer.

Its subcellular location is the cytoplasm. The catalysed reaction is (2S,6S)-2,6-diaminopimelate = meso-2,6-diaminopimelate. Its pathway is amino-acid biosynthesis; L-lysine biosynthesis via DAP pathway; DL-2,6-diaminopimelate from LL-2,6-diaminopimelate: step 1/1. Catalyzes the stereoinversion of LL-2,6-diaminopimelate (L,L-DAP) to meso-diaminopimelate (meso-DAP), a precursor of L-lysine and an essential component of the bacterial peptidoglycan. The chain is Diaminopimelate epimerase from Microcystis aeruginosa (strain NIES-843 / IAM M-2473).